Reading from the N-terminus, the 113-residue chain is Class I hydrophobin POH1 (113 aa).

Residues 1–26 form the signal peptide; that stretch reads MFSIRISTVVLAASALLAVAIPMTNT. 4 disulfide bridges follow: cysteine 31–cysteine 93, cysteine 38–cysteine 87, cysteine 39–cysteine 74, and cysteine 94–cysteine 107.

This sequence belongs to the fungal hydrophobin family. In terms of assembly, self-assembles to form functional amyloid fibrils called rodlets. Self-assembly into fibrillar rodlets occurs spontaneously at hydrophobic:hydrophilic interfaces and the rodlets further associate laterally to form amphipathic monolayers. In terms of tissue distribution, expressed in the fruiting bodies but not in vegetative mycelium.

The protein localises to the secreted. The protein resides in the cell wall. Its function is as follows. Aerial growth, conidiation, and dispersal of filamentous fungi in the environment rely upon a capability of their secreting small amphipathic proteins called hydrophobins (HPBs) with low sequence identity. Class I can self-assemble into an outermost layer of rodlet bundles on aerial cell surfaces, conferring cellular hydrophobicity that supports fungal growth, development and dispersal; whereas Class II form highly ordered films at water-air interfaces through intermolecular interactions but contribute nothing to the rodlet structure. POH1 is a class I hydrophobin that is involved in the formation of mycelium knots and subsequent fruiting bodies. The chain is Class I hydrophobin POH1 from Pleurotus ostreatus (Oyster mushroom).